The chain runs to 156 residues: Large ribosomal subunit protein uL15 (156 aa).

Residues 1 to 16 (MVRRFKRGTKYRRGSR) show a composition bias toward basic residues. Residues 1-37 (MVRRFKRGTKYRRGSRTHGWGRVGQHRKSGGSGGKGM) form a disordered region.

This sequence belongs to the universal ribosomal protein uL15 family. Part of the 50S ribosomal subunit.

Functionally, binds to the 23S rRNA. The polypeptide is Large ribosomal subunit protein uL15 (Pyrobaculum aerophilum (strain ATCC 51768 / DSM 7523 / JCM 9630 / CIP 104966 / NBRC 100827 / IM2)).